The following is a 528-amino-acid chain: Succinate-semialdehyde dehydrogenase, mitochondrial (528 aa).

The N-terminal 34 residues, 1–34, are a transit peptide targeting the mitochondrion; that stretch reads MVIGAAARVAIGGCRKLISSHTSLLLVSSQCRQM. 196–198 serves as a coordination point for NAD(+); that stretch reads TPW. R207 provides a ligand contact to substrate. NAD(+)-binding positions include 222–225, 275–280, and E297; these read KPSE and GSTAVG. E297 functions as the Proton acceptor in the catalytic mechanism. R325 is a substrate binding site. C331 acts as the Nucleophile in catalysis. Residues C331 and C333 are joined by a disulfide bond. An NAD(+)-binding site is contributed by 428–430; sequence EIF. S488 is a binding site for substrate.

The protein belongs to the aldehyde dehydrogenase family. In terms of assembly, homotetramer. Expressed in developing leaf tissues.

It localises to the mitochondrion matrix. It catalyses the reaction succinate semialdehyde + NAD(+) + H2O = succinate + NADH + 2 H(+). The protein operates within amino-acid degradation; 4-aminobutanoate degradation. Its activity is regulated as follows. Competitive inhibition by NADH. Inhibited by ATP, ADP and AMP. Redox-regulated. Inhibited under oxydizing conditions. Functionally, oxidizes specifically succinate semialdehyde. Involved in plant response to environmental stress by preventing the accumulation of reactive oxygen species, probably by regulating proline, gamma-hydroxybutyrate (GHB) and gamma-aminobutyrate (GABA) levels. Required for the maintenance of the shoot apical meristem (SAM) structure and subsequent adaxial-abaxial axis-dependent development of cotyledons and leaves. In Arabidopsis thaliana (Mouse-ear cress), this protein is Succinate-semialdehyde dehydrogenase, mitochondrial.